The sequence spans 442 residues: Tubulin beta chain (442 aa).

Residues Gln-11, Glu-69, Ser-138, Gly-142, Thr-143, Gly-144, Asn-204, and Asn-226 each coordinate GTP. A Mg(2+)-binding site is contributed by Glu-69.

The protein belongs to the tubulin family. In terms of assembly, dimer of alpha and beta chains. A typical microtubule is a hollow water-filled tube with an outer diameter of 25 nm and an inner diameter of 15 nM. Alpha-beta heterodimers associate head-to-tail to form protofilaments running lengthwise along the microtubule wall with the beta-tubulin subunit facing the microtubule plus end conferring a structural polarity. Microtubules usually have 13 protofilaments but different protofilament numbers can be found in some organisms and specialized cells. Requires Mg(2+) as cofactor.

The protein resides in the cytoplasm. Its subcellular location is the cytoskeleton. In terms of biological role, tubulin is the major constituent of microtubules, a cylinder consisting of laterally associated linear protofilaments composed of alpha- and beta-tubulin heterodimers. Microtubules grow by the addition of GTP-tubulin dimers to the microtubule end, where a stabilizing cap forms. Below the cap, tubulin dimers are in GDP-bound state, owing to GTPase activity of alpha-tubulin. The protein is Tubulin beta chain of Trypanosoma cruzi.